The chain runs to 396 residues: Flavohemoprotein (396 aa).

Residues 1-136 (MLDNHTIAIV…LANVFIQRED (136 aa)) form the Globin domain. Residue H85 participates in heme b binding. Residues Y95 and E135 each act as charge relay system in the active site. Residues 147–396 (GGWSGVRPFR…YECFGPHKVV (250 aa)) form a reductase region. The 106-residue stretch at 150 to 255 (SGVRPFRIVN…AAPHGDFFLD (106 aa)) folds into the FAD-binding FR-type domain. Residues Y188 and 204–207 (RQYS) each bind FAD. Residue 268 to 273 (GVGQTP) coordinates NADP(+). An FAD-binding site is contributed by 389–392 (CFGP).

The protein belongs to the globin family. Two-domain flavohemoproteins subfamily. In the C-terminal section; belongs to the flavoprotein pyridine nucleotide cytochrome reductase family. The cofactor is heme b. FAD serves as cofactor.

It carries out the reaction 2 nitric oxide + NADPH + 2 O2 = 2 nitrate + NADP(+) + H(+). The enzyme catalyses 2 nitric oxide + NADH + 2 O2 = 2 nitrate + NAD(+) + H(+). In terms of biological role, is involved in NO detoxification in an aerobic process, termed nitric oxide dioxygenase (NOD) reaction that utilizes O(2) and NAD(P)H to convert NO to nitrate, which protects the bacterium from various noxious nitrogen compounds. Therefore, plays a central role in the inducible response to nitrosative stress. The chain is Flavohemoprotein from Pectobacterium atrosepticum (strain SCRI 1043 / ATCC BAA-672) (Erwinia carotovora subsp. atroseptica).